Here is a 92-residue protein sequence, read N- to C-terminus: RNA-binding protein Hfq (92 aa).

The 60-residue stretch at 9–68 (DPFLNALRRERVPVSVYLVNGIKLQGTIESFDQFVVLLRNTVSQMVYKHAISTVVPARNV) folds into the Sm domain. Residues 72–92 (PGGGYVQSNENNQAEDDDVEQ) are disordered.

It belongs to the Hfq family. In terms of assembly, homohexamer.

In terms of biological role, RNA chaperone that binds small regulatory RNA (sRNAs) and mRNAs to facilitate mRNA translational regulation in response to envelope stress, environmental stress and changes in metabolite concentrations. Also binds with high specificity to tRNAs. The sequence is that of RNA-binding protein Hfq from Xanthomonas campestris pv. campestris (strain 8004).